Consider the following 715-residue polypeptide: Polyribonucleotide nucleotidyltransferase (715 aa).

Residues Asp-490 and Asp-496 each coordinate Mg(2+). In terms of domain architecture, KH spans 557–616; it reads PRIETMTIPTDKIREVIGSGGKVIREIVETSGAKVDISDDGTIKIASANADSIKKAYDMI. The S1 motif domain maps to 626–694; it reads GKIYVGKVVK…DRGKVRLGMK (69 aa).

The protein belongs to the polyribonucleotide nucleotidyltransferase family. Mg(2+) serves as cofactor.

The protein resides in the cytoplasm. It carries out the reaction RNA(n+1) + phosphate = RNA(n) + a ribonucleoside 5'-diphosphate. Functionally, involved in mRNA degradation. Catalyzes the phosphorolysis of single-stranded polyribonucleotides processively in the 3'- to 5'-direction. The polypeptide is Polyribonucleotide nucleotidyltransferase (Paracoccus denitrificans (strain Pd 1222)).